The sequence spans 225 residues: MDIRPNHTIYINNMNDKIKKEELKRSLYALFSQFGHVVDIVALKTMKMRGQAFVIFKELGSSTNALRQLQGFPFYGKPMRIQYAKTDSDIISKMRGTFADKEKKKEKKKAKTVEQTATTTNKKPGQGTPNSANTQGNSTPNPQVPDYPPNYILFLNNLPEETNEMMLSMLFNQFPGFKEVRLVPGRHDIAFVEFENDGQAGAARDALQGFKITPSHAMKITYAKK.

Positions 7–86 constitute an RRM 1 domain; sequence HTIYINNMND…KPMRIQYAKT (80 aa). The interval 99-145 is disordered; that stretch reads ADKEKKKEKKKAKTVEQTATTTNKKPGQGTPNSANTQGNSTPNPQVP. N6-acetyllysine; alternate is present on lysine 111. Residue lysine 111 forms a Glycyl lysine isopeptide (Lys-Gly) (interchain with G-Cter in SUMO2); alternate linkage. Positions 113–123 are enriched in low complexity; sequence VEQTATTTNKK. Over residues 127-141 the composition is skewed to polar residues; that stretch reads GTPNSANTQGNSTPN. Tyrosine 151 carries the post-translational modification Phosphotyrosine. Residues 151-225 enclose the RRM 2 domain; that stretch reads YILFLNNLPE…HAMKITYAKK (75 aa).

This sequence belongs to the RRM U1 A/B'' family. As to quaternary structure, identified in the spliceosome B complex. Identified in the spliceosome C complex. Present in a spliceosome complex assembled in vitro, and composed of SNRPB2, HPRP8BP and CRNKL1. Contributes to the binding of stem loop IV of U2 snRNA with SNRPP1.

It localises to the nucleus. In terms of biological role, involved in pre-mRNA splicing as component of the spliceosome. Associated with sn-RNP U2, where it contributes to the binding of stem loop IV of U2 snRNA. The chain is U2 small nuclear ribonucleoprotein B'' (SNRPB2) from Homo sapiens (Human).